Here is a 427-residue protein sequence, read N- to C-terminus: Serine--tRNA ligase (427 aa).

L-serine is bound at residue Thr233 to Glu235. Arg264–Glu266 is an ATP binding site. Glu287 lines the L-serine pocket. Glu351–Ser354 contacts ATP. Ser387 is a binding site for L-serine.

Belongs to the class-II aminoacyl-tRNA synthetase family. Type-1 seryl-tRNA synthetase subfamily. As to quaternary structure, homodimer. The tRNA molecule binds across the dimer.

The protein resides in the cytoplasm. The catalysed reaction is tRNA(Ser) + L-serine + ATP = L-seryl-tRNA(Ser) + AMP + diphosphate + H(+). It catalyses the reaction tRNA(Sec) + L-serine + ATP = L-seryl-tRNA(Sec) + AMP + diphosphate + H(+). Its pathway is aminoacyl-tRNA biosynthesis; selenocysteinyl-tRNA(Sec) biosynthesis; L-seryl-tRNA(Sec) from L-serine and tRNA(Sec): step 1/1. In terms of biological role, catalyzes the attachment of serine to tRNA(Ser). Is also able to aminoacylate tRNA(Sec) with serine, to form the misacylated tRNA L-seryl-tRNA(Sec), which will be further converted into selenocysteinyl-tRNA(Sec). This is Serine--tRNA ligase from Buchnera aphidicola subsp. Schizaphis graminum (strain Sg).